The primary structure comprises 264 residues: Regulatory protein RecX (264 aa).

The protein belongs to the RecX family.

The protein localises to the cytoplasm. In terms of biological role, modulates RecA activity. This Limosilactobacillus reuteri (strain DSM 20016) (Lactobacillus reuteri) protein is Regulatory protein RecX.